A 158-amino-acid chain; its full sequence is 6,7-dimethyl-8-ribityllumazine synthase (158 aa).

Residues Phe24, 58–60 (AFE), and 82–84 (AVI) each bind 5-amino-6-(D-ribitylamino)uracil. Residue 87–88 (GT) coordinates (2S)-2-hydroxy-3-oxobutyl phosphate. His90 acts as the Proton donor in catalysis. A 5-amino-6-(D-ribitylamino)uracil-binding site is contributed by Phe115. Arg129 lines the (2S)-2-hydroxy-3-oxobutyl phosphate pocket.

It belongs to the DMRL synthase family. Forms an icosahedral capsid composed of 60 subunits, arranged as a dodecamer of pentamers.

The enzyme catalyses (2S)-2-hydroxy-3-oxobutyl phosphate + 5-amino-6-(D-ribitylamino)uracil = 6,7-dimethyl-8-(1-D-ribityl)lumazine + phosphate + 2 H2O + H(+). It participates in cofactor biosynthesis; riboflavin biosynthesis; riboflavin from 2-hydroxy-3-oxobutyl phosphate and 5-amino-6-(D-ribitylamino)uracil: step 1/2. In terms of biological role, catalyzes the formation of 6,7-dimethyl-8-ribityllumazine by condensation of 5-amino-6-(D-ribitylamino)uracil with 3,4-dihydroxy-2-butanone 4-phosphate. This is the penultimate step in the biosynthesis of riboflavin. This chain is 6,7-dimethyl-8-ribityllumazine synthase, found in Azotobacter vinelandii (strain DJ / ATCC BAA-1303).